We begin with the raw amino-acid sequence, 95 residues long: Co-chaperonin GroES (95 aa).

This sequence belongs to the GroES chaperonin family. In terms of assembly, heptamer of 7 subunits arranged in a ring. Interacts with the chaperonin GroEL.

The protein localises to the cytoplasm. Functionally, together with the chaperonin GroEL, plays an essential role in assisting protein folding. The GroEL-GroES system forms a nano-cage that allows encapsulation of the non-native substrate proteins and provides a physical environment optimized to promote and accelerate protein folding. GroES binds to the apical surface of the GroEL ring, thereby capping the opening of the GroEL channel. The polypeptide is Co-chaperonin GroES (Streptococcus equi subsp. equi (strain 4047)).